Reading from the N-terminus, the 82-residue chain is MKRNNSKKVRVEPTRRPKKNPLKARGIEAVDYKDIETLRTFISERGKIRSRRVTGLTPQQQRQVATAVKNAREMALLPFTSR.

Residues 1-21 (MKRNNSKKVRVEPTRRPKKNP) form a disordered region.

The protein belongs to the bacterial ribosomal protein bS18 family. As to quaternary structure, part of the 30S ribosomal subunit. Forms a tight heterodimer with protein bS6.

Binds as a heterodimer with protein bS6 to the central domain of the 16S rRNA, where it helps stabilize the platform of the 30S subunit. The protein is Small ribosomal subunit protein bS18 of Corynebacterium kroppenstedtii (strain DSM 44385 / JCM 11950 / CIP 105744 / CCUG 35717).